We begin with the raw amino-acid sequence, 311 residues long: Glutamyl-Q tRNA(Asp) synthetase (311 aa).

Residues 14–18 and Glu-50 contribute to the L-glutamate site; that span reads RYAPS. The short motif at 17-27 is the 'HIGH' region element; sequence PSPSGDLHLGN. Zn(2+) is bound by residues Cys-104, Cys-106, Tyr-125, and Cys-129. Tyr-186 and Arg-204 together coordinate L-glutamate. A 'KMSKS' region motif is present at residues 242–246; the sequence is RLAKR. Residue Lys-245 participates in ATP binding.

The protein belongs to the class-I aminoacyl-tRNA synthetase family. GluQ subfamily. It depends on Zn(2+) as a cofactor.

In terms of biological role, catalyzes the tRNA-independent activation of glutamate in presence of ATP and the subsequent transfer of glutamate onto a tRNA(Asp). Glutamate is transferred on the 2-amino-5-(4,5-dihydroxy-2-cyclopenten-1-yl) moiety of the queuosine in the wobble position of the QUC anticodon. This chain is Glutamyl-Q tRNA(Asp) synthetase, found in Nocardia farcinica (strain IFM 10152).